A 196-amino-acid chain; its full sequence is MSQIFAYCRISTLDQTTENQRREIESAGFKIKPQQIIEEHISGSAATSERPGFNRLLARLKCGDQLIVTKLDRLGCNAMDIRKTVEQLTETGIRVHCLALGGIDLTSPTGKMMMQVISAVAEFERDLLLERTHSGIVRARGAGKRFGRPPVLNEEQKQAVFERIKSGVSISAIAREFKTSRQTILRAKAKLQTPDI.

Positions 3–143 (QIFAYCRIST…SGIVRARGAG (141 aa)) constitute a Resolvase/invertase-type recombinase catalytic domain. Serine 11 serves as the catalytic O-(5'-phospho-DNA)-serine intermediate.

It belongs to the site-specific recombinase resolvase family.

In Escherichia coli (strain K12), this protein is Serine recombinase PinQ (pinQ).